We begin with the raw amino-acid sequence, 432 residues long: Thiol-specific monooxygenase (432 aa).

Residues Gly13–Gly17 and Val46–Trp47 contribute to the FAD site. Residue Thr65 to Asn66 participates in NADP(+) binding. Glu117 to Val118 is a binding site for FAD. An NADP(+)-binding site is contributed by Ser199–Asp202.

Belongs to the FMO family. Monomer. FAD is required as a cofactor.

Functionally, flavin-dependent oxidation of thiol-containing compounds. Probably required for the correct folding of disulfide-bonded proteins. The chain is Thiol-specific monooxygenase (FMO1) from Saccharomyces cerevisiae (strain ATCC 204508 / S288c) (Baker's yeast).